A 512-amino-acid chain; its full sequence is Endoglucanase 14 (512 aa).

A signal peptide spans 1–22; sequence MLAAAIELVVIATSCMVRDAHG. Residue Asn76 is glycosylated (N-linked (GlcNAc...) asparagine). The active-site Nucleophile is Asp103. N-linked (GlcNAc...) asparagine glycans are attached at residues Asn192 and Asn215. Catalysis depends on residues His433, Asp484, and Glu493.

The protein belongs to the glycosyl hydrolase 9 (cellulase E) family.

The protein localises to the secreted. It catalyses the reaction Endohydrolysis of (1-&gt;4)-beta-D-glucosidic linkages in cellulose, lichenin and cereal beta-D-glucans.. This Oryza sativa subsp. japonica (Rice) protein is Endoglucanase 14.